The chain runs to 821 residues: Cell wall integrity transcriptional regulator CAS5 (821 aa).

Disordered regions lie at residues 42–66 (HLQS…LNQH), 219–245 (FESP…LSTP), 305–432 (TKSN…STSQ), 544–576 (QEEE…TSSL), and 607–750 (VKQE…KHKC). The span at 222 to 245 (PQSHIQSQPSYSQGYHNQNSLSTP) shows a compositional bias: polar residues. Residues 305–318 (TKSNSTSSYNSTLN) are compositionally biased toward low complexity. Positions 319–329 (PFYTPSQQLSS) are enriched in polar residues. Basic residues predominate over residues 372–387 (QLRKAKSYTSLLRKKK). Over residues 396 to 412 (QNQQHQQQQQQQQQQQQ) the composition is skewed to low complexity. Over residues 422 to 432 (QNLSFPNSTSQ) the composition is skewed to polar residues. A compositionally biased stretch (acidic residues) spans 545 to 561 (EEEQEHQDEQMEIDSFE). Composition is skewed to low complexity over residues 662-674 (LVNK…NNDT) and 684-693 (KNTNGNGNND). The span at 694-714 (NDNDSEENNDNVDDADDDDDG) shows a compositional bias: acidic residues. 2 C2H2-type zinc fingers span residues 748-770 (HKCP…LKSH) and 776-801 (FECQ…KKIH). At Ser-769 the chain carries Phosphoserine.

Phosphorylation at Ser-769 and probably additional serine residues. GLC7 dephosphorylates CAS5 in response to cell wall stress which leads to its translocation to the nucleus.

It is found in the nucleus. The protein localises to the cytoplasm. In terms of biological role, transcription factor that acts with ADA2 to promote cell wall integrity. Regulates the expression of target genes in concert with the transcriptional regulators SWI4 and SWI6. Crucial for proper cell cycle dynamics and responses to echinocandins, which inhibit beta-1,3-glucan synthesis. Has distinct transcriptional targets under basal and stress conditions. Also regulates a transcriptional network that influences the response to fluconazole. Plays a key role in adherence, hyphal development, and virulence. Acts as a repressor of hypha-specific genes during yeast-form growth. In Candida albicans (strain SC5314 / ATCC MYA-2876) (Yeast), this protein is Cell wall integrity transcriptional regulator CAS5.